The following is a 299-amino-acid chain: Lymphocyte antigen 6 complex locus protein G6f (299 aa).

An N-terminal signal peptide occupies residues 1–19 (MAVLFLLLLFLCGLPQAET). The 105-residue stretch at 20-124 (DSIQAIYVVL…YRYQNWRVYD (105 aa)) folds into the Ig-like V-type domain. At 20–237 (DSIQAIYVVL…APSADWDVAW (218 aa)) the chain is on the extracellular side. Cys-37 and Cys-108 form a disulfide bridge. A glycan (N-linked (GlcNAc...) asparagine) is linked at Asn-90. The chain crosses the membrane as a helical span at residues 238 to 258 (ILTLLLTVGQGFTIVVLGVML). Residues 259 to 299 (WRQRAQGAQHRNASFPQFKPEIQVYENIHLAHLSPPAPKTR) are Cytoplasmic-facing. Tyr-283 carries the post-translational modification Phosphotyrosine.

As to quaternary structure, homodimer; disulfide-linked. Interacts with GRB2 and GRB7 in a phosphorylation-dependent manner. Post-translationally, N-glycosylated.

Its subcellular location is the cell membrane. Functionally, may play a role in the downstream signal transduction pathways involving GRB2 and GRB7. This chain is Lymphocyte antigen 6 complex locus protein G6f (LY6G6F), found in Bos taurus (Bovine).